The sequence spans 329 residues: DNA-directed RNA polymerase subunit alpha (329 aa).

Residues 1–234 form an alpha N-terminal domain (alpha-NTD) region; the sequence is MQGSVTEFLK…EQLDAFVELR (234 aa). The alpha C-terminal domain (alpha-CTD) stretch occupies residues 248 to 329; that stretch reads FDPILLRPVD…WPPASLADDL (82 aa).

Belongs to the RNA polymerase alpha chain family. In terms of assembly, homodimer. The RNAP catalytic core consists of 2 alpha, 1 beta, 1 beta' and 1 omega subunit. When a sigma factor is associated with the core the holoenzyme is formed, which can initiate transcription.

It catalyses the reaction RNA(n) + a ribonucleoside 5'-triphosphate = RNA(n+1) + diphosphate. DNA-dependent RNA polymerase catalyzes the transcription of DNA into RNA using the four ribonucleoside triphosphates as substrates. The sequence is that of DNA-directed RNA polymerase subunit alpha from Shewanella putrefaciens (strain CN-32 / ATCC BAA-453).